The primary structure comprises 124 residues: Small ribosomal subunit protein bS6 (124 aa).

Residues 99–124 (PLPAPRIVPGSEPEPVQQQEAAAVEA) form a disordered region. Over residues 111–124 (PEPVQQQEAAAVEA) the composition is skewed to low complexity.

The protein belongs to the bacterial ribosomal protein bS6 family.

In terms of biological role, binds together with bS18 to 16S ribosomal RNA. In Prochlorococcus marinus (strain MIT 9313), this protein is Small ribosomal subunit protein bS6.